Reading from the N-terminus, the 203-residue chain is Small ribosomal subunit protein uS4 (203 aa).

Positions 93–154 (RRFDNVVYRC…KSRNLDAVAD (62 aa)) constitute an S4 RNA-binding domain.

Belongs to the universal ribosomal protein uS4 family. In terms of assembly, part of the 30S ribosomal subunit. Contacts protein S5. The interaction surface between S4 and S5 is involved in control of translational fidelity.

In terms of biological role, one of the primary rRNA binding proteins, it binds directly to 16S rRNA where it nucleates assembly of the body of the 30S subunit. Functionally, with S5 and S12 plays an important role in translational accuracy. This chain is Small ribosomal subunit protein uS4, found in Chlorobaculum parvum (strain DSM 263 / NCIMB 8327) (Chlorobium vibrioforme subsp. thiosulfatophilum).